The sequence spans 318 residues: Transaldolase (318 aa).

Residue Lys126 is the Schiff-base intermediate with substrate of the active site.

The protein belongs to the transaldolase family. Type 1 subfamily. Homodimer.

It localises to the cytoplasm. It carries out the reaction D-sedoheptulose 7-phosphate + D-glyceraldehyde 3-phosphate = D-erythrose 4-phosphate + beta-D-fructose 6-phosphate. Its pathway is carbohydrate degradation; pentose phosphate pathway; D-glyceraldehyde 3-phosphate and beta-D-fructose 6-phosphate from D-ribose 5-phosphate and D-xylulose 5-phosphate (non-oxidative stage): step 2/3. Transaldolase is important for the balance of metabolites in the pentose-phosphate pathway. In Cupriavidus metallidurans (strain ATCC 43123 / DSM 2839 / NBRC 102507 / CH34) (Ralstonia metallidurans), this protein is Transaldolase.